Reading from the N-terminus, the 182-residue chain is Peptidyl-prolyl cis-trans isomerase C, mitochondrial (182 aa).

Residues 1-20 constitute a mitochondrion transit peptide; sequence MFKRSIIQQSRLFSNSASRL. The PPIase cyclophilin-type domain maps to 25 to 181; it reads FFDPAVNGTK…AEIVIEEAGE (157 aa).

This sequence belongs to the cyclophilin-type PPIase family.

Its subcellular location is the mitochondrion matrix. The enzyme catalyses [protein]-peptidylproline (omega=180) = [protein]-peptidylproline (omega=0). With respect to regulation, inhibited by the immunosuppressant drug cyclosporin A and by SDZ NIM811, a PPIase inhibitor. Its function is as follows. PPIases accelerate the folding of proteins. It catalyzes the cis-trans isomerization of proline imidic peptide bonds in oligopeptides. This isozyme is required for growth on lactate at high temperature. The polypeptide is Peptidyl-prolyl cis-trans isomerase C, mitochondrial (CPR3) (Saccharomyces cerevisiae (strain ATCC 204508 / S288c) (Baker's yeast)).